The primary structure comprises 83 residues: Toxin TdNa3 (83 aa).

Positions 1-20 (MKGMIMLISCLMLIDVVVES) are cleaved as a signal peptide. The 62-residue stretch at 21-82 (KNGYIIEPKG…IFDYYNNKCG (62 aa)) folds into the LCN-type CS-alpha/beta domain. 4 cysteine pairs are disulfide-bonded: cysteine 31/cysteine 81, cysteine 35/cysteine 57, cysteine 43/cysteine 62, and cysteine 47/cysteine 64. Cysteine 81 is subject to Cysteine amide.

Belongs to the long (4 C-C) scorpion toxin superfamily. Sodium channel inhibitor family. Beta subfamily. In terms of tissue distribution, expressed by the venom gland.

Its subcellular location is the secreted. In terms of biological role, inhibits the sodium currents (Nav) in an apparent irreversible manner. Produces small depolarization and induces repetitive firing in squid axons. Is specific for arthropods (crickets, triatomides, crabs and squids), but is non-toxic to mice. The protein is Toxin TdNa3 of Tityus discrepans (Venezuelan scorpion).